The primary structure comprises 396 residues: Elongation factor Tu 2 (396 aa).

The tr-type G domain maps to 10–206; it reads KPHINVGTIG…VLDSYIPEPQ (197 aa). Positions 19 to 26 are G1; the sequence is GHVDHGKT. 19–26 is a binding site for GTP; the sequence is GHVDHGKT. Threonine 26 contacts Mg(2+). The segment at 60–64 is G2; the sequence is GITIN. Residues 81 to 84 are G3; that stretch reads DCPG. GTP-binding positions include 81–85 and 136–139; these read DCPGH and NKAD. The interval 136 to 139 is G4; that stretch reads NKAD. The interval 174-176 is G5; sequence SAL.

The protein belongs to the TRAFAC class translation factor GTPase superfamily. Classic translation factor GTPase family. EF-Tu/EF-1A subfamily. Monomer.

It localises to the cytoplasm. The catalysed reaction is GTP + H2O = GDP + phosphate + H(+). Functionally, GTP hydrolase that promotes the GTP-dependent binding of aminoacyl-tRNA to the A-site of ribosomes during protein biosynthesis. This is Elongation factor Tu 2 from Nitrosomonas eutropha (strain DSM 101675 / C91 / Nm57).